A 227-amino-acid polypeptide reads, in one-letter code: Orotidine 5'-phosphate decarboxylase (227 aa).

Substrate is bound by residues Asp-12, Lys-34, Asp-61–Thr-70, Thr-117, Arg-178, Gln-187, Gly-207, and Arg-208. The Proton donor role is filled by Lys-63.

Belongs to the OMP decarboxylase family. Type 1 subfamily. In terms of assembly, homodimer.

The catalysed reaction is orotidine 5'-phosphate + H(+) = UMP + CO2. The protein operates within pyrimidine metabolism; UMP biosynthesis via de novo pathway; UMP from orotate: step 2/2. Functionally, catalyzes the decarboxylation of orotidine 5'-monophosphate (OMP) to uridine 5'-monophosphate (UMP). The protein is Orotidine 5'-phosphate decarboxylase of Anaeromyxobacter sp. (strain K).